Here is a 295-residue protein sequence, read N- to C-terminus: Nucleotide-binding protein RD1_1380 (295 aa).

ATP is bound at residue Gly16–Ser23. Residue Asp63 to Asn66 participates in GTP binding.

This sequence belongs to the RapZ-like family.

Its function is as follows. Displays ATPase and GTPase activities. The chain is Nucleotide-binding protein RD1_1380 from Roseobacter denitrificans (strain ATCC 33942 / OCh 114) (Erythrobacter sp. (strain OCh 114)).